The chain runs to 241 residues: Transforming protein p29 (241 aa).

The interval 1–41 (MPAARAAPAADEPMRDPVAPVRAPALPRPAPGAVAPASGGA) is disordered. 2 S-palmitoyl cysteine; by host lipidation sites follow: Cys233 and Cys236. At Cys238 the chain carries Cysteine methyl ester; by host. Cys238 is lipidated: S-farnesyl cysteine; by host. The propeptide at 239–241 (VLS) is removed in mature form.

Belongs to the small GTPase superfamily. Ras family.

The protein resides in the host cell membrane. It carries out the reaction GTP + H2O = GDP + phosphate + H(+). With respect to regulation, alternates between an inactive form bound to GDP and an active form bound to GTP. Activated by a guanine nucleotide-exchange factor (GEF) and inactivated by a GTPase-activating protein (GAP). The protein is Transforming protein p29 (H-RAS) of Mus musculus (Mouse).